The chain runs to 257 residues: uncharacterized protein (257 aa).

This is an uncharacterized protein from Mycobacterium tuberculosis (strain CDC 1551 / Oshkosh).